The following is a 434-amino-acid chain: Glutamyl-tRNA reductase (434 aa).

Substrate-binding positions include Thr-49–Arg-52, Ser-109, Glu-114–Gln-116, and Gln-120. The active-site Nucleophile is Cys-50. Residue Gly-189–Cys-194 participates in NADP(+) binding.

Belongs to the glutamyl-tRNA reductase family. As to quaternary structure, homodimer.

It catalyses the reaction (S)-4-amino-5-oxopentanoate + tRNA(Glu) + NADP(+) = L-glutamyl-tRNA(Glu) + NADPH + H(+). The protein operates within porphyrin-containing compound metabolism; protoporphyrin-IX biosynthesis; 5-aminolevulinate from L-glutamyl-tRNA(Glu): step 1/2. Catalyzes the NADPH-dependent reduction of glutamyl-tRNA(Glu) to glutamate 1-semialdehyde (GSA). This chain is Glutamyl-tRNA reductase, found in Trichlorobacter lovleyi (strain ATCC BAA-1151 / DSM 17278 / SZ) (Geobacter lovleyi).